Consider the following 268-residue polypeptide: Shikimate dehydrogenase (NADP(+)) (268 aa).

Residues 13 to 15 (SLS) and Thr-60 each bind shikimate. Lys-64 functions as the Proton acceptor in the catalytic mechanism. Glu-76 is an NADP(+) binding site. Shikimate-binding residues include Asn-85 and Asp-100. NADP(+)-binding positions include 124–128 (GAGGA), 148–153 (NRTMAR), and Ile-209. Shikimate is bound at residue Tyr-211. Gly-232 serves as a coordination point for NADP(+).

It belongs to the shikimate dehydrogenase family. As to quaternary structure, homodimer.

The enzyme catalyses shikimate + NADP(+) = 3-dehydroshikimate + NADPH + H(+). Its pathway is metabolic intermediate biosynthesis; chorismate biosynthesis; chorismate from D-erythrose 4-phosphate and phosphoenolpyruvate: step 4/7. Its function is as follows. Involved in the biosynthesis of the chorismate, which leads to the biosynthesis of aromatic amino acids. Catalyzes the reversible NADPH linked reduction of 3-dehydroshikimate (DHSA) to yield shikimate (SA). In Staphylococcus aureus (strain MSSA476), this protein is Shikimate dehydrogenase (NADP(+)).